Reading from the N-terminus, the 54-residue chain is Large ribosomal subunit protein bL33 (54 aa).

Belongs to the bacterial ribosomal protein bL33 family.

In Rhodopirellula baltica (strain DSM 10527 / NCIMB 13988 / SH1), this protein is Large ribosomal subunit protein bL33.